The primary structure comprises 122 residues: Small ribosomal subunit protein uS13 (122 aa).

Positions 97-122 (PVRGQRTHTNARTRKGPAKAIAGKKK) are disordered.

This sequence belongs to the universal ribosomal protein uS13 family. As to quaternary structure, part of the 30S ribosomal subunit. Forms a loose heterodimer with protein S19. Forms two bridges to the 50S subunit in the 70S ribosome.

In terms of biological role, located at the top of the head of the 30S subunit, it contacts several helices of the 16S rRNA. In the 70S ribosome it contacts the 23S rRNA (bridge B1a) and protein L5 of the 50S subunit (bridge B1b), connecting the 2 subunits; these bridges are implicated in subunit movement. Contacts the tRNAs in the A and P-sites. The sequence is that of Small ribosomal subunit protein uS13 from Bartonella tribocorum (strain CIP 105476 / IBS 506).